A 240-amino-acid polypeptide reads, in one-letter code: 2,3,4,5-tetrahydropyridine-2,6-dicarboxylate N-acetyltransferase (240 aa).

It belongs to the transferase hexapeptide repeat family. DapH subfamily.

It carries out the reaction (S)-2,3,4,5-tetrahydrodipicolinate + acetyl-CoA + H2O = L-2-acetamido-6-oxoheptanedioate + CoA. It participates in amino-acid biosynthesis; L-lysine biosynthesis via DAP pathway; LL-2,6-diaminopimelate from (S)-tetrahydrodipicolinate (acetylase route): step 1/3. Catalyzes the transfer of an acetyl group from acetyl-CoA to tetrahydrodipicolinate. In Bacillus thuringiensis (strain Al Hakam), this protein is 2,3,4,5-tetrahydropyridine-2,6-dicarboxylate N-acetyltransferase.